A 257-amino-acid polypeptide reads, in one-letter code: Zinc transporter ZupT (257 aa).

Transmembrane regions (helical) follow at residues 5–25 (LILT…GVLG), 32–52 (VLAF…LMEM), and 61–81 (GMSP…YFGL). Fe(2+)-binding residues include Asn-120 and Glu-123. Zn(2+) is bound by residues Glu-123 and His-148. Fe(2+) contacts are provided by Asn-149, Glu-152, and Glu-181. A Zn(2+)-binding site is contributed by Glu-152. The next 3 helical transmembrane spans lie at 182 to 202 (IFGG…IVMA), 203 to 223 (AIMA…LMPL), and 236 to 256 (GVLC…TIGI).

This sequence belongs to the ZIP transporter (TC 2.A.5) family. ZupT subfamily.

It localises to the cell inner membrane. The enzyme catalyses Zn(2+)(in) = Zn(2+)(out). Its function is as follows. Mediates zinc uptake. May also transport other divalent cations. In Salmonella arizonae (strain ATCC BAA-731 / CDC346-86 / RSK2980), this protein is Zinc transporter ZupT.